A 50-amino-acid polypeptide reads, in one-letter code: Conotoxin Cal6.19 (50 aa).

An N-terminal signal peptide occupies residues 1-22 (MKVTCVLVLTLMALTVCQVATA). 3 cysteine pairs are disulfide-bonded: C24–C37, C30–C41, and C36–C46.

Expressed by the venom duct.

It localises to the secreted. In terms of biological role, probable neurotoxin. In Californiconus californicus (California cone), this protein is Conotoxin Cal6.19.